An 87-amino-acid chain; its full sequence is U3-theraphotoxin-Hhn1a 17 (87 aa).

The first 24 residues, 1–24 (MVNVKASMFLTFAGLVLLFVVCYA), serve as a signal peptide directing secretion. A propeptide spanning residues 25-52 (SESEEKEFPKEMLSSIFAVDNDFKQEER) is cleaved from the precursor. 3 disulfide bridges follow: Cys54–Cys67, Cys61–Cys72, and Cys66–Cys79.

Belongs to the neurotoxin 10 (Hwtx-1) family. 51 (Hntx-8) subfamily. Hntx-8 sub-subfamily. As to expression, expressed by the venom gland.

The protein resides in the secreted. Functionally, ion channel inhibitor. The polypeptide is U3-theraphotoxin-Hhn1a 17 (Cyriopagopus hainanus (Chinese bird spider)).